A 212-amino-acid polypeptide reads, in one-letter code: Hydroxyacylglutathione hydrolase GloC (212 aa).

Residues histidine 55, histidine 57, aspartate 59, histidine 60, histidine 132, aspartate 151, and histidine 192 each coordinate Zn(2+).

It belongs to the metallo-beta-lactamase superfamily. Glyoxalase II family. Zn(2+) is required as a cofactor.

The catalysed reaction is an S-(2-hydroxyacyl)glutathione + H2O = a 2-hydroxy carboxylate + glutathione + H(+). It carries out the reaction (R)-S-lactoylglutathione + H2O = (R)-lactate + glutathione + H(+). Its pathway is secondary metabolite metabolism; methylglyoxal degradation; (R)-lactate from methylglyoxal: step 2/2. In terms of biological role, type II glyoxalase, isozyme of GloB, that hydrolyzes (R)-S-lactoylglutathione to (R)-lactate and glutathione. Plays a role in methylglyoxal (MG) detoxification. The protein is Hydroxyacylglutathione hydrolase GloC of Haemophilus influenzae (strain ATCC 51907 / DSM 11121 / KW20 / Rd).